The chain runs to 60 residues: Large ribosomal subunit protein bL32 (60 aa).

Positions 1–60 are disordered; that stretch reads MAVQQVKKSRSKRDIRRSHDSLTNPTLSTDKSTGELHLRHHVSPNGFYKGRKVVDTKSED. Positions 7–16 are enriched in basic residues; that stretch reads KKSRSKRDIR. Residues 22–31 show a composition bias toward polar residues; sequence LTNPTLSTDK.

The protein belongs to the bacterial ribosomal protein bL32 family.

This is Large ribosomal subunit protein bL32 from Francisella tularensis subsp. tularensis (strain SCHU S4 / Schu 4).